Here is a 485-residue protein sequence, read N- to C-terminus: Probable serine/threonine-protein kinase nek1 (485 aa).

The Protein kinase domain occupies 12-283; it reads YLIKSQIGSG…TQQILEQVFI (272 aa). ATP contacts are provided by residues 18–26 and Lys-41; that span reads IGSGSYGNT. Residue Asp-136 is the Proton acceptor of the active site. The span at 354–365 shows a compositional bias: polar residues; the sequence is KNQQQQSPQKLE. The segment at 354–419 is disordered; it reads KNQQQQSPQK…NNDKNNNINN (66 aa). Residues 366-419 are compositionally biased toward low complexity; it reads NNNNNNNDNNNNNNNNNNNNNNNNNNNNNNNNNNNNNNNNNNNNNNDKNNNINN.

The protein belongs to the protein kinase superfamily. NEK Ser/Thr protein kinase family. NIMA subfamily.

It carries out the reaction L-seryl-[protein] + ATP = O-phospho-L-seryl-[protein] + ADP + H(+). The catalysed reaction is L-threonyl-[protein] + ATP = O-phospho-L-threonyl-[protein] + ADP + H(+). The sequence is that of Probable serine/threonine-protein kinase nek1 (nek1) from Dictyostelium discoideum (Social amoeba).